A 105-amino-acid chain; its full sequence is N(4)-acetylcytidine amidohydrolase (105 aa).

In terms of domain architecture, ASCH spans 7 to 93 (TFFERFEHDI…VIAEIYPGLE (87 aa)). The active-site Proton acceptor is K21. T24 serves as the catalytic Nucleophile. E74 functions as the Proton donor in the catalytic mechanism.

The protein belongs to the N(4)-acetylcytidine amidohydrolase family.

The enzyme catalyses N(4)-acetylcytidine + H2O = cytidine + acetate + H(+). It catalyses the reaction N(4)-acetyl-2'-deoxycytidine + H2O = 2'-deoxycytidine + acetate + H(+). It carries out the reaction N(4)-acetylcytosine + H2O = cytosine + acetate + H(+). Its function is as follows. Catalyzes the hydrolysis of N(4)-acetylcytidine (ac4C). The sequence is that of N(4)-acetylcytidine amidohydrolase from Shewanella baltica (strain OS223).